Reading from the N-terminus, the 430-residue chain is Histidinol dehydrogenase (430 aa).

Residues serine 237, glutamine 259, and histidine 262 each coordinate substrate. The Zn(2+) site is built by glutamine 259 and histidine 262. Residues glutamate 327 and histidine 328 each act as proton acceptor in the active site. The substrate site is built by histidine 328, aspartate 361, glutamate 415, and histidine 420. Aspartate 361 provides a ligand contact to Zn(2+). Residue histidine 420 participates in Zn(2+) binding.

It belongs to the histidinol dehydrogenase family. Requires Zn(2+) as cofactor.

The enzyme catalyses L-histidinol + 2 NAD(+) + H2O = L-histidine + 2 NADH + 3 H(+). It participates in amino-acid biosynthesis; L-histidine biosynthesis; L-histidine from 5-phospho-alpha-D-ribose 1-diphosphate: step 9/9. Its function is as follows. Catalyzes the sequential NAD-dependent oxidations of L-histidinol to L-histidinaldehyde and then to L-histidine. The polypeptide is Histidinol dehydrogenase (Mesorhizobium japonicum (strain LMG 29417 / CECT 9101 / MAFF 303099) (Mesorhizobium loti (strain MAFF 303099))).